Here is a 254-residue protein sequence, read N- to C-terminus: Pimeloyl-[acyl-carrier protein] methyl ester esterase (254 aa).

Positions 14-242 (LVLLHGWGMN…ASHAPFISHP (229 aa)) constitute an AB hydrolase-1 domain. Substrate is bound by residues Trp-20, 82–83 (SL), and 143–147 (FLAIQ). Catalysis depends on Ser-82, which acts as the Nucleophile. Residues Asp-207 and His-235 contribute to the active site. His-235 lines the substrate pocket.

The protein belongs to the AB hydrolase superfamily. Carboxylesterase BioH family. As to quaternary structure, monomer.

The protein localises to the cytoplasm. The catalysed reaction is 6-carboxyhexanoyl-[ACP] methyl ester + H2O = 6-carboxyhexanoyl-[ACP] + methanol + H(+). The protein operates within cofactor biosynthesis; biotin biosynthesis. In terms of biological role, the physiological role of BioH is to remove the methyl group introduced by BioC when the pimeloyl moiety is complete. It allows to synthesize pimeloyl-ACP via the fatty acid synthetic pathway through the hydrolysis of the ester bonds of pimeloyl-ACP esters. The polypeptide is Pimeloyl-[acyl-carrier protein] methyl ester esterase (Aeromonas hydrophila subsp. hydrophila (strain ATCC 7966 / DSM 30187 / BCRC 13018 / CCUG 14551 / JCM 1027 / KCTC 2358 / NCIMB 9240 / NCTC 8049)).